The following is a 438-amino-acid chain: Serine hydroxymethyltransferase (438 aa).

(6S)-5,6,7,8-tetrahydrofolate contacts are provided by residues Leu-133 and 137–139 (GHL). Lys-242 is modified (N6-(pyridoxal phosphate)lysine).

Belongs to the SHMT family. Homodimer. Pyridoxal 5'-phosphate serves as cofactor.

The protein resides in the cytoplasm. It carries out the reaction (6R)-5,10-methylene-5,6,7,8-tetrahydrofolate + glycine + H2O = (6S)-5,6,7,8-tetrahydrofolate + L-serine. It participates in one-carbon metabolism; tetrahydrofolate interconversion. The protein operates within amino-acid biosynthesis; glycine biosynthesis; glycine from L-serine: step 1/1. In terms of biological role, catalyzes the reversible interconversion of serine and glycine with tetrahydrofolate (THF) serving as the one-carbon carrier. This reaction serves as the major source of one-carbon groups required for the biosynthesis of purines, thymidylate, methionine, and other important biomolecules. Also exhibits THF-independent aldolase activity toward beta-hydroxyamino acids, producing glycine and aldehydes, via a retro-aldol mechanism. This Brucella melitensis biotype 2 (strain ATCC 23457) protein is Serine hydroxymethyltransferase.